We begin with the raw amino-acid sequence, 290 residues long: NAD kinase (290 aa).

Catalysis depends on D72, which acts as the Proton acceptor. Residues 72–73, K77, 145–146, D175, 186–191, and A210 each bind NAD(+); these read DG, NE, and TAYSLS.

It belongs to the NAD kinase family. The cofactor is a divalent metal cation.

Its subcellular location is the cytoplasm. It catalyses the reaction NAD(+) + ATP = ADP + NADP(+) + H(+). Its function is as follows. Involved in the regulation of the intracellular balance of NAD and NADP, and is a key enzyme in the biosynthesis of NADP. Catalyzes specifically the phosphorylation on 2'-hydroxyl of the adenosine moiety of NAD to yield NADP. The protein is NAD kinase of Bacteroides fragilis (strain ATCC 25285 / DSM 2151 / CCUG 4856 / JCM 11019 / LMG 10263 / NCTC 9343 / Onslow / VPI 2553 / EN-2).